The primary structure comprises 409 residues: NADH-quinone oxidoreductase subunit D 1 (409 aa).

This sequence belongs to the complex I 49 kDa subunit family. As to quaternary structure, NDH-1 is composed of 14 different subunits. Subunits NuoB, C, D, E, F, and G constitute the peripheral sector of the complex.

Its subcellular location is the cell inner membrane. It catalyses the reaction a quinone + NADH + 5 H(+)(in) = a quinol + NAD(+) + 4 H(+)(out). NDH-1 shuttles electrons from NADH, via FMN and iron-sulfur (Fe-S) centers, to quinones in the respiratory chain. The immediate electron acceptor for the enzyme in this species is believed to be ubiquinone. Couples the redox reaction to proton translocation (for every two electrons transferred, four hydrogen ions are translocated across the cytoplasmic membrane), and thus conserves the redox energy in a proton gradient. The sequence is that of NADH-quinone oxidoreductase subunit D 1 from Solibacter usitatus (strain Ellin6076).